Here is a 203-residue protein sequence, read N- to C-terminus: CASP-like protein 2U6 (203 aa).

The Cytoplasmic portion of the chain corresponds to 1 to 31; it reads MSEHRIPVAADKKISPPISAGEQKGCKGLKR. A helical transmembrane segment spans residues 32-52; the sequence is TDLMLRFAAFVCCTVTMVVLI. The Extracellular segment spans residues 53 to 84; it reads TDKQTSAIQVPGFNNLTITKTVSFDLAKAFVY. An N-linked (GlcNAc...) asparagine glycan is attached at asparagine 67. Residues 85–105 form a helical membrane-spanning segment; that stretch reads LVSAAGIGAGYTLLVLVLSII. At 106–111 the chain is on the cytoplasmic side; it reads SAERSK. A helical transmembrane segment spans residues 112–132; sequence AIAWFIFVFDQLITYVLLAAA. Residues 133-164 lie on the Extracellular side of the membrane; the sequence is AASTEVAYMGAHAPPEASWLKVCSLFGRFCHQ. The helical transmembrane segment at 165–185 threads the bilayer; that stretch reads LGASLVTSLISTVLFAFSAAI. At 186–203 the chain is on the cytoplasmic side; that stretch reads SAYYLFSNTNVRPAYSKG.

It belongs to the Casparian strip membrane proteins (CASP) family. As to quaternary structure, homodimer and heterodimers.

It is found in the cell membrane. The polypeptide is CASP-like protein 2U6 (Selaginella moellendorffii (Spikemoss)).